The sequence spans 681 residues: Transmembrane protein 214-A (681 aa).

Disordered regions lie at residues methionine 1–proline 41 and lysine 58–glutamine 99. 2 N-linked (GlcNAc...) asparagine glycosylation sites follow: asparagine 300 and asparagine 324. Helical transmembrane passes span glycine 471 to tyrosine 491 and leucine 608 to valine 628.

This sequence belongs to the TMEM214 family. As to quaternary structure, constitutively interacts with CASP4; required for the localization of procaspase 4 to the ER.

The protein localises to the endoplasmic reticulum membrane. Functionally, critical mediator, in cooperation with CASP4, of endoplasmic reticulum-stress induced apoptosis. Required or the activation of CASP4 following endoplasmic reticulum stress. The polypeptide is Transmembrane protein 214-A (tmem214-a) (Xenopus laevis (African clawed frog)).